The following is a 255-amino-acid chain: 1-(5-phosphoribosyl)-5-[(5-phosphoribosylamino)methylideneamino] imidazole-4-carboxamide isomerase (255 aa).

D8 (proton acceptor) is an active-site residue. D129 serves as the catalytic Proton donor.

Belongs to the HisA/HisF family.

It is found in the cytoplasm. The enzyme catalyses 1-(5-phospho-beta-D-ribosyl)-5-[(5-phospho-beta-D-ribosylamino)methylideneamino]imidazole-4-carboxamide = 5-[(5-phospho-1-deoxy-D-ribulos-1-ylimino)methylamino]-1-(5-phospho-beta-D-ribosyl)imidazole-4-carboxamide. It participates in amino-acid biosynthesis; L-histidine biosynthesis; L-histidine from 5-phospho-alpha-D-ribose 1-diphosphate: step 4/9. The polypeptide is 1-(5-phosphoribosyl)-5-[(5-phosphoribosylamino)methylideneamino] imidazole-4-carboxamide isomerase (Prochlorococcus marinus (strain MIT 9211)).